The primary structure comprises 612 residues: BTB/POZ domain-containing protein 9 (612 aa).

Residues 36–104 (GDVTFVVEKK…IYTGRATLTD (69 aa)) form the BTB domain. A BACK domain is found at 142-240 (VCMTFDVASL…SLTELLNVVR (99 aa)). The segment at 559-612 (QQSTQKEDSSEEPGTGDLSTPSQQLDPHAPRAPSASSLPPSPGPNLHSPNQQNQ) is disordered. The span at 589–612 (RAPSASSLPPSPGPNLHSPNQQNQ) shows a compositional bias: low complexity.

Detected throughout the gray matter of the spinal cord including the motor neurons (at protein level). In the brain, detected in the neurons of the hippocampus and in the Purkinje cells of the cerebellum (at protein level). Also detected in the terospenial cortex, bed nucleus of the stria terminalis (BST) and the ventrolateral thalamus (VL) (at protein level).

This Rattus norvegicus (Rat) protein is BTB/POZ domain-containing protein 9 (Btbd9).